Reading from the N-terminus, the 247-residue chain is 5'-nucleotidase SurE (247 aa).

A divalent metal cation contacts are provided by D8, D9, S39, and N91.

This sequence belongs to the SurE nucleotidase family. A divalent metal cation serves as cofactor.

Its subcellular location is the cytoplasm. The enzyme catalyses a ribonucleoside 5'-phosphate + H2O = a ribonucleoside + phosphate. Its function is as follows. Nucleotidase that shows phosphatase activity on nucleoside 5'-monophosphates. This is 5'-nucleotidase SurE from Nitrosomonas eutropha (strain DSM 101675 / C91 / Nm57).